Reading from the N-terminus, the 255-residue chain is Na(+)-translocating NADH-quinone reductase subunit C (255 aa).

Residues 11-31 (LGVVVGLSLVCSIIVSTAAVG) traverse the membrane as a helical segment. Thr-223 is modified (FMN phosphoryl threonine).

This sequence belongs to the NqrC family. Composed of six subunits; NqrA, NqrB, NqrC, NqrD, NqrE and NqrF. Requires FMN as cofactor.

Its subcellular location is the cell inner membrane. It catalyses the reaction a ubiquinone + n Na(+)(in) + NADH + H(+) = a ubiquinol + n Na(+)(out) + NAD(+). Its function is as follows. NQR complex catalyzes the reduction of ubiquinone-1 to ubiquinol by two successive reactions, coupled with the transport of Na(+) ions from the cytoplasm to the periplasm. NqrA to NqrE are probably involved in the second step, the conversion of ubisemiquinone to ubiquinol. The protein is Na(+)-translocating NADH-quinone reductase subunit C of Vibrio vulnificus (strain CMCP6).